Reading from the N-terminus, the 236-residue chain is Envelope glycoprotein (236 aa).

Topologically, residues 1–202 (CQFDGNTISG…EWILGVLNGN (202 aa)) are lumenal. A glycan (N-linked (GlcNAc...) asparagine; by host) is linked at N25. 5 disulfide bridges follow: C67–C97, C90–C142, C107–C112, C143–C148, and C182–C186. Residues 203–223 (WMVVAVLIALLILSILLFTLC) traverse the membrane as a helical segment. 2 binding to the ribonucleoprotein regions span residues 219–231 (LFTL…PSYR) and 219–236 (LFTL…EHKP). At 224 to 236 (CPRRPSYRKEHKP) the chain is on the cytoplasmic side.

This sequence belongs to the hantavirus envelope glycoprotein family. As to quaternary structure, homodimer. Homotetramer; forms heterotetrameric Gn-Gc spikes in the pre-fusion conformation. Homotrimer; forms homotrimer in the post-fusion conformation at acidic pH. Interacts (via C-terminus) with the nucleoprotein. In terms of processing, envelope polyprotein precursor is quickly cleaved in vivo just after synthesis, presumably by host signal peptidase.

It localises to the virion membrane. The protein localises to the host cell surface. Its subcellular location is the host Golgi apparatus membrane. The protein resides in the host endoplasmic reticulum membrane. Forms homotetramers with glycoprotein N at the surface of the virion. Attaches the virion to host cell receptors including integrin ITGAV/ITGB3. This attachment induces virion internalization predominantly through clathrin-dependent endocytosis. Class II fusion protein that promotes fusion of viral membrane with host endosomal membrane after endocytosis of the virion. The sequence is that of Envelope glycoprotein (GP) from Homo sapiens (Human).